Reading from the N-terminus, the 279-residue chain is Thymidylate synthase (279 aa).

133–134 (RR) provides a ligand contact to dUMP. The Nucleophile role is filled by Cys-154. Residues 178–181 (RSND), Asn-189, and 219–221 (HIY) contribute to the dUMP site. A (6R)-5,10-methylene-5,6,7,8-tetrahydrofolate-binding site is contributed by Asp-181. Residue Ala-278 participates in (6R)-5,10-methylene-5,6,7,8-tetrahydrofolate binding.

It belongs to the thymidylate synthase family. Bacterial-type ThyA subfamily. In terms of assembly, homodimer.

The protein localises to the cytoplasm. It catalyses the reaction dUMP + (6R)-5,10-methylene-5,6,7,8-tetrahydrofolate = 7,8-dihydrofolate + dTMP. It participates in pyrimidine metabolism; dTTP biosynthesis. Its function is as follows. Catalyzes the reductive methylation of 2'-deoxyuridine-5'-monophosphate (dUMP) to 2'-deoxythymidine-5'-monophosphate (dTMP) while utilizing 5,10-methylenetetrahydrofolate (mTHF) as the methyl donor and reductant in the reaction, yielding dihydrofolate (DHF) as a by-product. This enzymatic reaction provides an intracellular de novo source of dTMP, an essential precursor for DNA biosynthesis. The protein is Thymidylate synthase of Streptococcus gordonii (strain Challis / ATCC 35105 / BCRC 15272 / CH1 / DL1 / V288).